A 124-amino-acid chain; its full sequence is Ribosome-binding factor A (124 aa).

This sequence belongs to the RbfA family. Monomer. Binds 30S ribosomal subunits, but not 50S ribosomal subunits or 70S ribosomes.

Its subcellular location is the cytoplasm. Functionally, one of several proteins that assist in the late maturation steps of the functional core of the 30S ribosomal subunit. Associates with free 30S ribosomal subunits (but not with 30S subunits that are part of 70S ribosomes or polysomes). Required for efficient processing of 16S rRNA. May interact with the 5'-terminal helix region of 16S rRNA. The protein is Ribosome-binding factor A of Thiobacillus denitrificans (strain ATCC 25259 / T1).